The sequence spans 509 residues: 4-aminobutyrate aminotransferase (509 aa).

166–167 provides a ligand contact to pyridoxal 5'-phosphate; sequence GS. Arg223 contacts substrate. An N6-(pyridoxal phosphate)lysine modification is found at Lys363. Residue Thr387 participates in pyridoxal 5'-phosphate binding.

It belongs to the class-III pyridoxal-phosphate-dependent aminotransferase family. Homodimer. Requires pyridoxal 5'-phosphate as cofactor.

The protein localises to the cytoplasm. The enzyme catalyses 4-aminobutanoate + 2-oxoglutarate = succinate semialdehyde + L-glutamate. In terms of biological role, deaminates gamma-aminobutyric acid (GABA) to succinate-semialdehyde, which in turn is converted to succinate by the succinate semialdehyde dehydrogenase. Not required for the utilization of GABA as nitrogen source. This Mycosarcoma maydis (Corn smut fungus) protein is 4-aminobutyrate aminotransferase (GATA).